The sequence spans 263 residues: Proenkephalin-A (263 aa).

Positions 1–24 (MARFLGLCTWLLALGPGLLATVRA) are cleaved as a signal peptide. 3 disulfide bridges follow: Cys-26–Cys-48, Cys-30–Cys-52, and Cys-33–Cys-65. 2 propeptides span residues 192-203 (SPHLEDETKELQ) and 213-223 (VGRPEWWMDYQ). The residue at position 247 (Ser-247) is a Phosphoserine.

This sequence belongs to the opioid neuropeptide precursor family. Post-translationally, proenkephalin-A is cleaved by CTSL to generate Met-enkephalin. Processed and degraded by ACE. In terms of processing, probably cleaved by ACE. Post-translationally, processed by ACE to generate Met-enkephalin in the nucleus accumbens of the brain. The N-terminal domain contains 6 conserved cysteines thought to be involved in disulfide bonding and/or processing. Secreted by neuroendocrine chromaffin cells through cromaffin granules.

The protein resides in the cytoplasmic vesicle. It is found in the secretory vesicle. Its subcellular location is the chromaffin granule lumen. It localises to the secreted. Its function is as follows. Neuropeptide that competes with and mimic the effects of opiate drugs. They play a role in a number of physiologic functions, including pain perception and responses to stress. Functionally, met-enkephalin-Arg-Phe neuropeptide acts as a strong ligand of Mu-type opioid receptor OPRM1. Met-enkephalin-Arg-Phe-binding to OPRM1 in the nucleus accumbens of the brain increases activation of OPRM1, leading to long-term synaptic depression of glutamate release. Increases glutamate release in the striatum and decreases GABA concentration in the striatum. In terms of biological role, increases glutamate release in the striatum. Its function is as follows. Enkelytin possesses antibacterial activity against Gram-positive bacteria such as Micrococcus luteus and Bacillus megaterium. This chain is Proenkephalin-A (PENK), found in Bos taurus (Bovine).